The primary structure comprises 359 residues: Peptide chain release factor 1 (359 aa).

Residue Q236 is modified to N5-methylglutamine.

The protein belongs to the prokaryotic/mitochondrial release factor family. Post-translationally, methylated by PrmC. Methylation increases the termination efficiency of RF1.

It is found in the cytoplasm. Functionally, peptide chain release factor 1 directs the termination of translation in response to the peptide chain termination codons UAG and UAA. The sequence is that of Peptide chain release factor 1 from Streptococcus agalactiae serotype Ia (strain ATCC 27591 / A909 / CDC SS700).